Consider the following 297-residue polypeptide: TATA-box-binding protein (297 aa).

Residues E52–S116 form a disordered region. 2 stretches are compositionally biased toward low complexity: residues R56–Q78 and M104–S114. 2 tandem repeats follow at residues L123–V199 and I213–L290.

Belongs to the TBP family. Belongs to the TFIID complex together with the TBP-associated factors (TAFs). Binds DNA as monomer. The N-terminal domain is extensively phosphorylated.

It localises to the nucleus. In terms of biological role, general transcription factor that functions at the core of the DNA-binding multiprotein factor TFIID. Binding of TFIID to the TATA box is the initial transcriptional step of the pre-initiation complex (PIC), playing a role in the activation of eukaryotic genes transcribed by RNA polymerase II. Members of the TBP family are differentially required to regulate transcription and development during early embryogenesis. Binds to the promoters of select genes. The sequence is that of TATA-box-binding protein from Xenopus tropicalis (Western clawed frog).